The sequence spans 417 residues: UDP-N-acetylglucosamine 1-carboxyvinyltransferase (417 aa).

Phosphoenolpyruvate is bound at residue 22 to 23; the sequence is KN. A UDP-N-acetyl-alpha-D-glucosamine-binding site is contributed by arginine 91. Cysteine 115 (proton donor) is an active-site residue. The residue at position 115 (cysteine 115) is a 2-(S-cysteinyl)pyruvic acid O-phosphothioketal. UDP-N-acetyl-alpha-D-glucosamine-binding positions include 120–124, aspartate 304, and isoleucine 326; that span reads RPVDQ.

The protein belongs to the EPSP synthase family. MurA subfamily.

It is found in the cytoplasm. The catalysed reaction is phosphoenolpyruvate + UDP-N-acetyl-alpha-D-glucosamine = UDP-N-acetyl-3-O-(1-carboxyvinyl)-alpha-D-glucosamine + phosphate. It participates in cell wall biogenesis; peptidoglycan biosynthesis. In terms of biological role, cell wall formation. Adds enolpyruvyl to UDP-N-acetylglucosamine. The polypeptide is UDP-N-acetylglucosamine 1-carboxyvinyltransferase (Desulfovibrio desulfuricans (strain ATCC 27774 / DSM 6949 / MB)).